The primary structure comprises 191 residues: Protein Ves (191 aa).

This sequence belongs to the Ves family.

The polypeptide is Protein Ves (Escherichia coli (strain SMS-3-5 / SECEC)).